The chain runs to 266 residues: MDTFQVIILALIQGLTEFLPISSSAHLILPAQLLGWEDQGLSFDVAVNTGSLFAVVIYFRHELWTMFNAWIASIFRGQQSEDSKLAWWIILATLPAVFFGFLAKDFIATHLRNAEVIAVTTVVFGLLLWWADKMSRRDLTVYQTGWRKALLIGFAQALALIPGTSRSGATMTAALMLGLSRDAAARFSFLMSVPVSLGAAILVGKDLAKSELPIDYQALILGTLISFVAAYACIHYFLKIISRMGMTPFVIYRLALGAVLCGFIFF.

Transmembrane regions (helical) follow at residues 1-21 (MDTFQVIILALIQGLTEFLPI), 39-59 (QGLSFDVAVNTGSLFAVVIYF), 87-107 (WWIILATLPAVFFGFLAKDFI), 114-134 (AEVIAVTTVVFGLLLWWADKM), 149-169 (ALLIGFAQALALIPGTSRSGA), 183-203 (AAARFSFLMSVPVSLGAAILV), 218-238 (ALILGTLISFVAAYACIHYFL), and 246-266 (MTPFVIYRLALGAVLCGFIFF).

Belongs to the UppP family.

It localises to the cell inner membrane. It catalyses the reaction di-trans,octa-cis-undecaprenyl diphosphate + H2O = di-trans,octa-cis-undecaprenyl phosphate + phosphate + H(+). In terms of biological role, catalyzes the dephosphorylation of undecaprenyl diphosphate (UPP). Confers resistance to bacitracin. This Shewanella baltica (strain OS223) protein is Undecaprenyl-diphosphatase.